Here is a 404-residue protein sequence, read N- to C-terminus: MTTYQTLFLIPLAISTLVTAWLPETDKTITSRNGTNLFASSKGKIRGVNMGSQFVFEPWIAEKAWSSMGCKGQKSEFDCVVSLGQDAANKAFAQHWGSWITQDDITEIQSYTLNTIRVPIGYWMKEDLVNKTSEHFPQGGFAYLEKLCGWASDAGLYIILDLHGAPGAQTPHNPFTGQYASTAGFYNDYQFGRALEFLEWITTKVHQSDSFRNVGMLEIVNEPLQNAQKVGSMRSTYYPDAFKRIRAAEQKLNVSKSGYLHIQMMDKLWGSGDPEEYLTDKYYVAYDDHRYLKWDPKVNVSKENYISTSCSDELDSNTPTIVGEWSLSVPDDVASTPDWDMDTNKDFYKKWFAAQITAYEKQRGWVFWTWKTQLGGYRWSYKDAVAAGVVPEDIDSALNMGVCN.

Residues 1–20 (MTTYQTLFLIPLAISTLVTA) form the signal peptide. 2 N-linked (GlcNAc...) asparagine glycosylation sites follow: N33 and N130. E222 serves as the catalytic Proton donor. N-linked (GlcNAc...) asparagine glycans are attached at residues N253 and N299. E324 (nucleophile) is an active-site residue.

This sequence belongs to the glycosyl hydrolase 5 (cellulase A) family.

The protein resides in the secreted. It catalyses the reaction Random hydrolysis of (1-&gt;6)-linkages in (1-&gt;6)-beta-D-glucans.. Beta-glucanases participate in the metabolism of beta-glucan, the main structural component of the cell wall. Acts on lutean, pustulan and 1,6-oligo-beta-D-glucosides. In Aspergillus terreus (strain NIH 2624 / FGSC A1156), this protein is Probable glucan endo-1,6-beta-glucosidase B (exgB).